The chain runs to 238 residues: C-reactive protein (238 aa).

Positions 1-16 are cleaved as a signal peptide; that stretch reads MERFALWFIFLAGSLA. Position 17 is a pyrrolidone carboxylic acid (glutamine 17). A Pentraxin (PTX) domain is found at 21–223; that stretch reads VGNVFLFPKP…QATTQPKRQC (203 aa). Cysteine 52 and cysteine 113 are oxidised to a cystine. Positions 76, 77, 154, 155, 156, and 166 each coordinate Ca(2+).

The protein belongs to the pentraxin family. As to quaternary structure, homodimer; disulfide-linked. It is not known if it assembles into a pentraxin (or pentaxin) structure. Pentaxins have a discoid arrangement of 5 non-covalently bound subunits. It depends on Ca(2+) as a cofactor. In terms of processing, cys-89 or Cys-223 or Cys-236 could be involved in interchain disulfide linkage.

Its subcellular location is the secreted. Functionally, displays several functions associated with host defense: it promotes agglutination, bacterial capsular swelling, phagocytosis, and complement fixation through its calcium-dependent binding to phosphorylcholine. This is C-reactive protein (crp) from Xenopus laevis (African clawed frog).